Consider the following 615-residue polypeptide: Probable ATP-citrate synthase subunit 1 (615 aa).

ATP contacts are provided by residues 221–241 (LIRF…EVGG) and 272–298 (FKTE…KNQA). Position 238 (glutamate 238) interacts with Mg(2+). The active-site Tele-phosphohistidine intermediate is histidine 280. 299 to 309 (MREAGIYVPET) is a CoA binding site. Serine 359 carries the post-translational modification Phosphoserine.

The protein belongs to the succinate/malate CoA ligase alpha subunit family. Composed of two subunits.

The protein localises to the cytoplasm. The enzyme catalyses oxaloacetate + acetyl-CoA + ADP + phosphate = citrate + ATP + CoA. Its function is as follows. Catalyzes the formation of cytosolic acetyl-CoA, which is mainly used for the biosynthesis of fatty acids and sterols. The sequence is that of Probable ATP-citrate synthase subunit 1 from Schizosaccharomyces pombe (strain 972 / ATCC 24843) (Fission yeast).